The primary structure comprises 175 residues: RNA pyrophosphohydrolase (175 aa).

A Nudix hydrolase domain is found at Gly6–Lys149. Positions Gly38–Gly59 match the Nudix box motif.

This sequence belongs to the Nudix hydrolase family. RppH subfamily. A divalent metal cation is required as a cofactor.

Its function is as follows. Accelerates the degradation of transcripts by removing pyrophosphate from the 5'-end of triphosphorylated RNA, leading to a more labile monophosphorylated state that can stimulate subsequent ribonuclease cleavage. This Yersinia enterocolitica serotype O:8 / biotype 1B (strain NCTC 13174 / 8081) protein is RNA pyrophosphohydrolase.